Consider the following 824-residue polypeptide: A-adding tRNA nucleotidyltransferase (824 aa).

CBS domains follow at residues 305 to 363 and 367 to 423; these read MNTP…DEPI and VNRD…LEKL. 459-462 contacts ATP; sequence GVVR. Positions 472 and 474 each coordinate Mg(2+). ATP contacts are provided by residues 545–546, N550, 590–599, R603, and R632; these read RD and DPVRILRALR.

This sequence belongs to the tRNA nucleotidyltransferase/poly(A) polymerase family. The cofactor is Mg(2+).

It carries out the reaction a tRNA with a 3' CC end + ATP = a tRNA with a 3' CCA end + diphosphate. TRNA nucleotidyltransferase involved in the synthesis of the tRNA CCA terminus. Adds the terminal adenosine residue to tRNA. Can incorporate CMP into tRNA ending with C74C75 (tRNACC), with very weak efficiency. The polypeptide is A-adding tRNA nucleotidyltransferase (Aquifex aeolicus (strain VF5)).